The sequence spans 85 residues: Cell division topological specificity factor (85 aa).

It belongs to the MinE family.

Functionally, prevents the cell division inhibition by proteins MinC and MinD at internal division sites while permitting inhibition at polar sites. This ensures cell division at the proper site by restricting the formation of a division septum at the midpoint of the long axis of the cell. The chain is Cell division topological specificity factor from Shewanella baltica (strain OS223).